The primary structure comprises 96 residues: Co-chaperonin GroES (96 aa).

This sequence belongs to the GroES chaperonin family. Heptamer of 7 subunits arranged in a ring. Interacts with the chaperonin GroEL.

The protein localises to the cytoplasm. In terms of biological role, together with the chaperonin GroEL, plays an essential role in assisting protein folding. The GroEL-GroES system forms a nano-cage that allows encapsulation of the non-native substrate proteins and provides a physical environment optimized to promote and accelerate protein folding. GroES binds to the apical surface of the GroEL ring, thereby capping the opening of the GroEL channel. This Polaromonas naphthalenivorans (strain CJ2) protein is Co-chaperonin GroES.